The sequence spans 758 residues: 5-methyltetrahydropteroyltriglutamate--homocysteine methyltransferase (758 aa).

Residues 17-20 and K117 contribute to the 5-methyltetrahydropteroyltri-L-glutamate site; that span reads RELK. Residues 434-436 and E487 contribute to the L-homocysteine site; that span reads IGS. L-methionine is bound by residues 434–436 and E487; that span reads IGS. Residues 518 to 519 and W564 contribute to the 5-methyltetrahydropteroyltri-L-glutamate site; that span reads RC. D602 is a binding site for L-homocysteine. L-methionine is bound at residue D602. E608 serves as a coordination point for 5-methyltetrahydropteroyltri-L-glutamate. Residues H644, C646, and E668 each coordinate Zn(2+). Residue H697 is the Proton donor of the active site. C729 contacts Zn(2+).

Belongs to the vitamin-B12 independent methionine synthase family. It depends on Zn(2+) as a cofactor.

It catalyses the reaction 5-methyltetrahydropteroyltri-L-glutamate + L-homocysteine = tetrahydropteroyltri-L-glutamate + L-methionine. It functions in the pathway amino-acid biosynthesis; L-methionine biosynthesis via de novo pathway; L-methionine from L-homocysteine (MetE route): step 1/1. Catalyzes the transfer of a methyl group from 5-methyltetrahydrofolate to homocysteine resulting in methionine formation. This is 5-methyltetrahydropteroyltriglutamate--homocysteine methyltransferase from Yersinia pestis bv. Antiqua (strain Antiqua).